A 314-amino-acid polypeptide reads, in one-letter code: Olfactory receptor 4K2 (314 aa).

At 1-25 (MDVGNKSTMSEFVLLGLSNSWELQM) the chain is on the extracellular side. N-linked (GlcNAc...) asparagine glycosylation is present at Asn-5. Residues 26–49 (FFFMVFSLLYVATMVGNSLIVITV) traverse the membrane as a helical segment. The Cytoplasmic segment spans residues 50–57 (IVDPHLHS). Residues 58 to 79 (PMYFLLTNLSIIDMSLASFATP) form a helical membrane-spanning segment. Over 80–100 (KMITDYLTGHKTISFDGCLTQ) the chain is Extracellular. Cys-97 and Cys-189 form a disulfide bridge. The chain crosses the membrane as a helical span at residues 101 to 120 (IFFLHLFTGTEIILLMAMSF). Residues 121-139 (DRYIAICKPLHYASVISPQ) are Cytoplasmic-facing. The chain crosses the membrane as a helical span at residues 140-158 (VCVALVVASWIMGVMHSMS). Residues 159–195 (QVIFALTLPFCGPYEVDSFFCDLPVVFQLACVDTYVL) lie on the Extracellular side of the membrane. A helical membrane pass occupies residues 196 to 219 (GLFMISTSGIIALSCFIVLFNSYV). Over 220-235 (IVLVTVKHHSSRGSSK) the chain is Cytoplasmic. Residues 236 to 258 (ALSTCTAHFIVVFLFFGPCIFIY) form a helical membrane-spanning segment. Topologically, residues 259–269 (MWPLSSFLTDK) are extracellular. Residues 270 to 289 (ILSVFYTIFTPTLNPIIYTL) form a helical membrane-spanning segment. Residues 290–314 (RNQEVKIAMRKLKNRFLNFNKAMPS) are Cytoplasmic-facing.

This sequence belongs to the G-protein coupled receptor 1 family.

It localises to the cell membrane. In terms of biological role, odorant receptor. The protein is Olfactory receptor 4K2 (OR4K2) of Homo sapiens (Human).